Here is a 641-residue protein sequence, read N- to C-terminus: Probable serine protease FE772_23065 (641 aa).

The helical transmembrane segment at 532–552 (WVELIAILAAAGWIRVMLIGL) threads the bilayer.

This sequence belongs to the peptidase S1 family.

The protein resides in the cell inner membrane. In terms of biological role, possibly a dedicated protease for substrate gasdermin bGSDM; cleaves the bGSDM precursor, releasing the pore-forming moiety, which integrates into the membrane and triggers cell death. Involved in defense against bacteriophages. When this probable 4 gene operon (bGSDM-FE772_23060-FE772_23065-FE772_23070) is inserted into E.coli it provides nearly 100-fold protection against phages T5 and T6 and about 8-fold against phage T4. The operon without bGSDM no longer protects against phage. This is Probable serine protease FE772_23065 from Lysobacter enzymogenes.